The chain runs to 330 residues: Probable NAD(P)H-dependent D-xylose reductase xyl1 (330 aa).

Tyr-50 serves as the catalytic Proton donor. Residue His-112 participates in substrate binding. NAD(+) contacts are provided by residues 166-167 (SN), 215-224 (SSFGPLSFLE), and 271-281 (KSNNPTRLAQN).

Belongs to the aldo/keto reductase family.

It carries out the reaction xylitol + NAD(+) = D-xylose + NADH + H(+). The catalysed reaction is xylitol + NADP(+) = D-xylose + NADPH + H(+). It functions in the pathway carbohydrate metabolism; D-xylose degradation. In terms of biological role, catalyzes the initial reaction in the xylose utilization pathway by reducing D-xylose into xylitol. Xylose is a major component of hemicelluloses such as xylan. Most fungi utilize D-xylose via three enzymatic reactions, xylose reductase (XR), xylitol dehydrogenase (XDH), and xylulokinase, to form xylulose 5-phosphate, which enters pentose phosphate pathway. In Aspergillus clavatus (strain ATCC 1007 / CBS 513.65 / DSM 816 / NCTC 3887 / NRRL 1 / QM 1276 / 107), this protein is Probable NAD(P)H-dependent D-xylose reductase xyl1 (xyl1).